The chain runs to 311 residues: Dihydroorotate dehydrogenase B (NAD(+)), catalytic subunit (311 aa).

Residues S24 and K48–A49 contribute to the FMN site. Substrate-binding positions include K48 and N72–L76. Residues N104 and N132 each coordinate FMN. N132 provides a ligand contact to substrate. C135 acts as the Nucleophile in catalysis. FMN is bound by residues K170 and I196. Residue N197–T198 coordinates substrate. FMN-binding positions include G222, G248 to G249, and G270 to T271.

Belongs to the dihydroorotate dehydrogenase family. Type 1 subfamily. In terms of assembly, heterotetramer of 2 PyrK and 2 PyrD type B subunits. FMN serves as cofactor.

It localises to the cytoplasm. The enzyme catalyses (S)-dihydroorotate + NAD(+) = orotate + NADH + H(+). The protein operates within pyrimidine metabolism; UMP biosynthesis via de novo pathway; orotate from (S)-dihydroorotate (NAD(+) route): step 1/1. Functionally, catalyzes the conversion of dihydroorotate to orotate with NAD(+) as electron acceptor. This is Dihydroorotate dehydrogenase B (NAD(+)), catalytic subunit (pyrDB) from Lactococcus lactis subsp. lactis (strain IL1403) (Streptococcus lactis).